We begin with the raw amino-acid sequence, 463 residues long: Asparagine--tRNA ligase (463 aa).

This sequence belongs to the class-II aminoacyl-tRNA synthetase family. As to quaternary structure, homodimer.

It localises to the cytoplasm. The enzyme catalyses tRNA(Asn) + L-asparagine + ATP = L-asparaginyl-tRNA(Asn) + AMP + diphosphate + H(+). This chain is Asparagine--tRNA ligase, found in Alkaliphilus oremlandii (strain OhILAs) (Clostridium oremlandii (strain OhILAs)).